Here is a 133-residue protein sequence, read N- to C-terminus: Ribosome-binding factor A (133 aa).

Belongs to the RbfA family. In terms of assembly, monomer. Binds 30S ribosomal subunits, but not 50S ribosomal subunits or 70S ribosomes.

The protein localises to the cytoplasm. In terms of biological role, one of several proteins that assist in the late maturation steps of the functional core of the 30S ribosomal subunit. Associates with free 30S ribosomal subunits (but not with 30S subunits that are part of 70S ribosomes or polysomes). Required for efficient processing of 16S rRNA. May interact with the 5'-terminal helix region of 16S rRNA. The polypeptide is Ribosome-binding factor A (Trichormus variabilis (strain ATCC 29413 / PCC 7937) (Anabaena variabilis)).